We begin with the raw amino-acid sequence, 513 residues long: Lysine--tRNA ligase (513 aa).

E423 and E430 together coordinate Mg(2+).

It belongs to the class-II aminoacyl-tRNA synthetase family. Homodimer. It depends on Mg(2+) as a cofactor.

Its subcellular location is the cytoplasm. It catalyses the reaction tRNA(Lys) + L-lysine + ATP = L-lysyl-tRNA(Lys) + AMP + diphosphate. This chain is Lysine--tRNA ligase, found in Anaeromyxobacter dehalogenans (strain 2CP-C).